The chain runs to 254 residues: Leucyl/phenylalanyl-tRNA--protein transferase (254 aa).

The protein belongs to the L/F-transferase family.

Its subcellular location is the cytoplasm. It carries out the reaction N-terminal L-lysyl-[protein] + L-leucyl-tRNA(Leu) = N-terminal L-leucyl-L-lysyl-[protein] + tRNA(Leu) + H(+). The enzyme catalyses N-terminal L-arginyl-[protein] + L-leucyl-tRNA(Leu) = N-terminal L-leucyl-L-arginyl-[protein] + tRNA(Leu) + H(+). It catalyses the reaction L-phenylalanyl-tRNA(Phe) + an N-terminal L-alpha-aminoacyl-[protein] = an N-terminal L-phenylalanyl-L-alpha-aminoacyl-[protein] + tRNA(Phe). In terms of biological role, functions in the N-end rule pathway of protein degradation where it conjugates Leu, Phe and, less efficiently, Met from aminoacyl-tRNAs to the N-termini of proteins containing an N-terminal arginine or lysine. This Burkholderia cenocepacia (strain ATCC BAA-245 / DSM 16553 / LMG 16656 / NCTC 13227 / J2315 / CF5610) (Burkholderia cepacia (strain J2315)) protein is Leucyl/phenylalanyl-tRNA--protein transferase.